Reading from the N-terminus, the 537-residue chain is Tyrosine-protein kinase fyna (537 aa).

Glycine 2 carries the N-myristoyl glycine lipid modification. 2 S-palmitoyl cysteine lipidation sites follow: cysteine 3 and cysteine 6. Threonine 12 is modified (phosphothreonine; by PKC). Positions lysine 13 to proline 34 are disordered. An SH3 domain is found at threonine 82 to serine 143. Residues tryptophan 149–cysteine 246 form the SH2 domain. The region spanning leucine 271–phenylalanine 524 is the Protein kinase domain. Residues leucine 277–valine 285 and lysine 299 contribute to the ATP site. The active-site Proton acceptor is aspartate 390. A Phosphotyrosine; by autocatalysis modification is found at tyrosine 420. Tyrosine 531 carries the post-translational modification Phosphotyrosine.

This sequence belongs to the protein kinase superfamily. Tyr protein kinase family. SRC subfamily. Requires Mn(2+) as cofactor. As to expression, widely expressed.

The protein localises to the cytoplasm. The protein resides in the nucleus. It carries out the reaction L-tyrosyl-[protein] + ATP = O-phospho-L-tyrosyl-[protein] + ADP + H(+). Inhibited by phosphorylation of Tyr-531 by leukocyte common antigen and activated by dephosphorylation of this site. Relatively inactive in the unfertilized oocyte, undergoes rapid activation immediately following fertilization. Total activity increases progressively during later development and remains elevated during sphere and epiboly stage. In terms of biological role, tyrosine-protein kinase implicated in the control of cell growth. Plays a role in the regulation of intracellular calcium levels. Required in brain development and mature brain function with important roles in the regulation of axon growth, axon guidance, and neurite extension. Role in cntn1-mediated signaling. Required for convergent extension cell movements during gastrulation, acting with yes via rhoa. May be required for epiboly to occur, possibly through its effects in calcium signaling. This Danio rerio (Zebrafish) protein is Tyrosine-protein kinase fyna (fyna).